A 249-amino-acid polypeptide reads, in one-letter code: tRNA pseudouridine synthase A (249 aa).

Residue aspartate 53 is the Nucleophile of the active site. Position 111 (tyrosine 111) interacts with substrate.

This sequence belongs to the tRNA pseudouridine synthase TruA family. In terms of assembly, homodimer.

The enzyme catalyses uridine(38/39/40) in tRNA = pseudouridine(38/39/40) in tRNA. Its function is as follows. Formation of pseudouridine at positions 38, 39 and 40 in the anticodon stem and loop of transfer RNAs. This Streptococcus pneumoniae serotype 2 (strain D39 / NCTC 7466) protein is tRNA pseudouridine synthase A.